The chain runs to 131 residues: Small ribosomal subunit protein bS6 (131 aa).

Residues 96–131 (ITEASPMAKAKDERDSRRGPAGDRSYDEANAEEIAE) form a disordered region. A compositionally biased stretch (basic and acidic residues) spans 104–122 (KAKDERDSRRGPAGDRSYD).

The protein belongs to the bacterial ribosomal protein bS6 family.

Binds together with bS18 to 16S ribosomal RNA. The protein is Small ribosomal subunit protein bS6 of Shewanella oneidensis (strain ATCC 700550 / JCM 31522 / CIP 106686 / LMG 19005 / NCIMB 14063 / MR-1).